A 289-amino-acid chain; its full sequence is MDGHQHHHLHQLQYLNKHHLHTQSQTPEIASPVAVGDRFPQWSVEETKELIGIRGELDQTFMETKRNKLLWEVISNKMRDKSFPRSPEQCKCKWKNLVTRFKGCETMEAETARQQFPFYDDMQNIFTTRMQRMLWAESEGGGGGTSGAARKREYSSDEEEENVNEELVDVSNDPKILNPKKNIAKKRKGGSNSSNSNNGVREVLEEFMRHQVRMESEWREGWEAREKERAEKEEEWRRKMEELEKERLAMERMWRDREEQRRSREEMRAEKRDSLINALLAKLTRDGSL.

In terms of domain architecture, Myb-like spans 42–98; the sequence is WSVEETKELIGIRGELDQTFMETKRNKLLWEVISNKMRDKSFPRSPEQCKCKWKNLV. The Bipartite nuclear localization signal motif lies at 65 to 81; sequence KRNKLLWEVISNKMRDK. A disordered region spans residues 137-200; that stretch reads ESEGGGGGTS…SNSSNSNNGV (64 aa). The span at 156–168 shows a compositional bias: acidic residues; that stretch reads SDEEEENVNEELV. Residues 179 to 188 carry the Nuclear localization signal motif; it reads PKKNIAKKRK. The span at 190-199 shows a compositional bias: low complexity; that stretch reads GSNSSNSNNG. Positions 223-275 form a coiled coil; it reads EAREKERAEKEEEWRRKMEELEKERLAMERMWRDREEQRRSREEMRAEKRDSL.

As to quaternary structure, heterodimer with GT-3A. Associated with the mediator complex.

The protein localises to the nucleus. Functionally, probable transcription factor that may play a role in the induction of CAM4 in response to pathogen and salt. In Arabidopsis thaliana (Mouse-ear cress), this protein is Trihelix transcription factor GT-3b (GT-3B).